We begin with the raw amino-acid sequence, 202 residues long: Dephospho-CoA kinase (202 aa).

The DPCK domain maps to 6–202 (KVSITGDLSS…EYFYALKGAL (197 aa)). 14–19 (SSGKTE) contacts ATP.

The protein belongs to the CoaE family.

It localises to the cytoplasm. The catalysed reaction is 3'-dephospho-CoA + ATP = ADP + CoA + H(+). It participates in cofactor biosynthesis; coenzyme A biosynthesis; CoA from (R)-pantothenate: step 5/5. Its function is as follows. Catalyzes the phosphorylation of the 3'-hydroxyl group of dephosphocoenzyme A to form coenzyme A. The chain is Dephospho-CoA kinase from Chlamydia pneumoniae (Chlamydophila pneumoniae).